A 217-amino-acid polypeptide reads, in one-letter code: Adenylate kinase (217 aa).

Position 10–15 (10–15 (GAGKGT)) interacts with ATP. Positions 30–59 (STGDMFRAAMKEETDLGLEAKSYIDKGELV) are NMP. Residues threonine 31, arginine 36, 57–59 (ELV), 85–88 (GFPR), and glutamine 92 each bind AMP. Positions 126–163 (GRRICKNCGATYHLVFNPPAKENVCDKCGGELYQREDD) are LID. Residue arginine 127 participates in ATP binding. Residues cysteine 130 and cysteine 133 each contribute to the Zn(2+) site. 136 to 137 (TY) provides a ligand contact to ATP. 2 residues coordinate Zn(2+): cysteine 150 and cysteine 153. AMP is bound by residues arginine 160 and arginine 171. Position 199 (lysine 199) interacts with ATP.

Belongs to the adenylate kinase family. As to quaternary structure, monomer.

It is found in the cytoplasm. The enzyme catalyses AMP + ATP = 2 ADP. It functions in the pathway purine metabolism; AMP biosynthesis via salvage pathway; AMP from ADP: step 1/1. Its function is as follows. Catalyzes the reversible transfer of the terminal phosphate group between ATP and AMP. Plays an important role in cellular energy homeostasis and in adenine nucleotide metabolism. This Bacillus licheniformis (strain ATCC 14580 / DSM 13 / JCM 2505 / CCUG 7422 / NBRC 12200 / NCIMB 9375 / NCTC 10341 / NRRL NRS-1264 / Gibson 46) protein is Adenylate kinase.